Here is a 508-residue protein sequence, read N- to C-terminus: Photosystem II CP47 reaction center protein (508 aa).

6 helical membrane passes run Ser-21–Ser-36, Ile-101–Trp-115, Gly-140–Phe-156, Ile-203–Ser-218, Val-237–Val-252, and Ser-457–Arg-472.

It belongs to the PsbB/PsbC family. PsbB subfamily. As to quaternary structure, PSII is composed of 1 copy each of membrane proteins PsbA, PsbB, PsbC, PsbD, PsbE, PsbF, PsbH, PsbI, PsbJ, PsbK, PsbL, PsbM, PsbT, PsbX, PsbY, PsbZ, Psb30/Ycf12, at least 3 peripheral proteins of the oxygen-evolving complex and a large number of cofactors. It forms dimeric complexes. It depends on Binds multiple chlorophylls. PSII binds additional chlorophylls, carotenoids and specific lipids. as a cofactor.

The protein resides in the plastid. The protein localises to the chloroplast thylakoid membrane. In terms of biological role, one of the components of the core complex of photosystem II (PSII). It binds chlorophyll and helps catalyze the primary light-induced photochemical processes of PSII. PSII is a light-driven water:plastoquinone oxidoreductase, using light energy to abstract electrons from H(2)O, generating O(2) and a proton gradient subsequently used for ATP formation. The polypeptide is Photosystem II CP47 reaction center protein (Pelargonium hortorum (Common geranium)).